The sequence spans 397 residues: Serpin B10 (397 aa).

Residues 62–85 are disordered; it reads RDQGVKSSPESEKKRKMEFNSSNS. The segment covering 70 to 79 has biased composition (basic and acidic residues); that stretch reads PESEKKRKME. A Nuclear localization signal motif is present at residues 74–77; the sequence is KKRK.

It belongs to the serpin family. Ov-serpin subfamily.

The protein localises to the nucleus. It localises to the cytoplasm. Its function is as follows. Protease inhibitor that may play a role in the regulation of protease activities during hematopoiesis and apoptosis induced by TNF. May regulate protease activities in the cytoplasm and in the nucleus. The sequence is that of Serpin B10 (SERPINB10) from Papio anubis (Olive baboon).